Reading from the N-terminus, the 274-residue chain is Thiamine kinase (274 aa).

Belongs to the thiamine kinase family.

The catalysed reaction is thiamine + ATP = thiamine phosphate + ADP + H(+). It functions in the pathway cofactor biosynthesis; thiamine diphosphate biosynthesis; thiamine phosphate from thiamine: step 1/1. In terms of biological role, catalyzes the ATP-dependent phosphorylation of thiamine to thiamine phosphate. Is involved in thiamine salvage. The sequence is that of Thiamine kinase from Escherichia coli O157:H7.